Reading from the N-terminus, the 327-residue chain is Tagatose 1,6-diphosphate aldolase 2 (327 aa).

This sequence belongs to the aldolase LacD family.

It carries out the reaction D-tagatofuranose 1,6-bisphosphate = D-glyceraldehyde 3-phosphate + dihydroxyacetone phosphate. It functions in the pathway carbohydrate metabolism; D-tagatose 6-phosphate degradation; D-glyceraldehyde 3-phosphate and glycerone phosphate from D-tagatose 6-phosphate: step 2/2. This chain is Tagatose 1,6-diphosphate aldolase 2 (lacD2), found in Streptococcus pyogenes serotype M1.